The following is a 265-amino-acid chain: Phosphonates import ATP-binding protein PhnC (265 aa).

The ABC transporter domain occupies 18-262 (LVVEHLRKEY…HLKQIYGGEE (245 aa)). Residue 51 to 58 (GPSGTGKS) coordinates ATP.

This sequence belongs to the ABC transporter superfamily. Phosphonates importer (TC 3.A.1.9.1) family. As to quaternary structure, the complex is composed of two ATP-binding proteins (PhnC), two transmembrane proteins (PhnE) and a solute-binding protein (PhnD).

The protein resides in the cell inner membrane. The catalysed reaction is phosphonate(out) + ATP + H2O = phosphonate(in) + ADP + phosphate + H(+). In terms of biological role, part of the ABC transporter complex PhnCDE involved in phosphonates import. Responsible for energy coupling to the transport system. The protein is Phosphonates import ATP-binding protein PhnC of Nitratidesulfovibrio vulgaris (strain ATCC 29579 / DSM 644 / CCUG 34227 / NCIMB 8303 / VKM B-1760 / Hildenborough) (Desulfovibrio vulgaris).